We begin with the raw amino-acid sequence, 524 residues long: Glucose-6-phosphate 1-dehydrogenase (524 aa).

A Phosphoserine modification is found at Ser20. Residues 42 to 49 (GASGDLAK), Arg76, and Lys175 contribute to the NADP(+) site. Residues Lys175, 205 to 209 (HYLGK), Glu243, and Asp262 each bind D-glucose 6-phosphate. Residue His267 is the Proton acceptor of the active site. An NADP(+)-binding site is contributed by Arg362. Residues Lys365 and Arg370 each contribute to the D-glucose 6-phosphate site. The NADP(+) site is built by Lys371, Arg375, and Arg398. Residue Gln400 coordinates D-glucose 6-phosphate. NADP(+)-binding positions include 406–408 (YFK), 426–428 (DLT), Arg492, Tyr508, and Trp514.

It belongs to the glucose-6-phosphate dehydrogenase family.

Its subcellular location is the cytoplasm. It localises to the cytosol. It carries out the reaction D-glucose 6-phosphate + NADP(+) = 6-phospho-D-glucono-1,5-lactone + NADPH + H(+). It functions in the pathway carbohydrate degradation; pentose phosphate pathway; D-ribulose 5-phosphate from D-glucose 6-phosphate (oxidative stage): step 1/3. In terms of biological role, cytosolic glucose-6-phosphate dehydrogenase that catalyzes the first and rate-limiting step of the oxidative branch within the pentose phosphate pathway/shunt, an alternative route to glycolysis for the dissimilation of carbohydrates and a major source of reducing power and metabolic intermediates for fatty acid and nucleic acid biosynthetic processes. This Drosophila melanogaster (Fruit fly) protein is Glucose-6-phosphate 1-dehydrogenase.